Consider the following 971-residue polypeptide: MELNDANLQTLTEFLRKALDPDPTVRRPAEKFLESVEGNQNYPLLLLTLLEKSQDNVIRVCAAVTFKNYIKRNWRVIEDEPNKVSDPDRTAIKANIVNLMLSSPEQIQKQLSDAISIIGREDFPQKWPDLLTEMVTRFRSGDFHIINGVLRTAHSLFKRYRHEFKSNELWSEIKLVLDTFALPLTELFKATIELCQTHATDVNALKVLFSSLTLISKLFYSLNFQDLPEFFEDNMETWMTNFHGLLTLDNKLLQTDDEEEAGLLELLKSQICDNAALYAQKYDEEFQPYLPRFVTAIWNLLVSTGQEVKYDLLVSNAIQFLASVCERPHYKHLFEDQNTLTSICEKVIVPNMEFRSADEEAFEDNSEEYIRRDLEGSDIDTRRRAACDLVRGLCKFFEGPVTAIFSGYVNSMLAEYAKNPGENWKHKDAAIYLVTSLASKAQTQKHGITQANELVNLNEFFVNHILSDLKSHNVNEFPVLKADAIKYVMIFRSQLPKEQLLQAVPLLISHLQAESTVEHTYAAHALERLFTMRGPNNTTLITPVEMAPFTEQLLNNLFKSLALPGSAENEYIMKAIMRTFSLLQEAIVPYIPTLIGQLTHKLLLVSKNPSKPHFNHYLFESLCLSVRITCKANPATVSSFEEALFPVFTEILQNDVQEFLPYVFQVMSLLLEIHSSSIPSSYMALFPHLLQPALWERTGNIPPLVRLLQAYLEKGGATIAASAADKIPGLLGVFQKLIASKANDHQGFYLLNSIIEHMPPESITQYRKQIFILLFQRLQSSKTTKFIKSFLVFVNLYSVKYGAIALQEIFDSIQPKMFGMVLEKIIIPEVQKVSGAVEKKICAVGITKVLTECPAMMDTEYTKLWTPLLQALIGLFELPEDDSIPDDEHFIDIEDTPGYQTAFSQLAFAGKKEHDPIGDAVGNPKILLAQSLHKLSTACPGRVPSMLSTSLNAEALQFLQGYLQAATVQLV.

The Importin N-terminal domain maps to 29-102 (AEKFLESVEG…KANIVNLMLS (74 aa)).

This sequence belongs to the XPO2/CSE1 family. As to quaternary structure, interacts with cftr.

It is found in the cytoplasm. It localises to the nucleus. Functionally, export receptor for importin alpha. Mediates importin-alpha re-export from the nucleus to the cytoplasm after import substrates have been released into the nucleoplasm. Negatively regulates fluid secretion and plays a role in fluid homeostasis by down-regulating cftr activity. This is Exportin-2 (cse1l) from Pagrus major (Red sea bream).